Reading from the N-terminus, the 869-residue chain is Aconitate hydratase B (869 aa).

Residues Arg191, 244–246 (SSR), 417–419 (QDT), and Ser501 each bind substrate. 3 residues coordinate [4Fe-4S] cluster: Cys713, Cys772, and Cys775. Substrate is bound by residues Arg794 and Arg799.

It belongs to the aconitase/IPM isomerase family. Monomer. The cofactor is [4Fe-4S] cluster.

It carries out the reaction citrate = D-threo-isocitrate. The catalysed reaction is (2S,3R)-3-hydroxybutane-1,2,3-tricarboxylate = 2-methyl-cis-aconitate + H2O. Its pathway is carbohydrate metabolism; tricarboxylic acid cycle; isocitrate from oxaloacetate: step 2/2. It participates in organic acid metabolism; propanoate degradation. Its function is as follows. Involved in the catabolism of short chain fatty acids (SCFA) via the tricarboxylic acid (TCA)(acetyl degradation route) and probably via the 2-methylcitrate cycle I (propionate degradation route). Catalyzes the reversible isomerization of citrate to isocitrate via cis-aconitate. Catalyzes the hydration of 2-methyl-cis-aconitate to yield (2R,3S)-2-methylisocitrate. The apo form of AcnB functions as a RNA-binding regulatory protein. This chain is Aconitate hydratase B (acnB), found in Pseudomonas aeruginosa (strain ATCC 15692 / DSM 22644 / CIP 104116 / JCM 14847 / LMG 12228 / 1C / PRS 101 / PAO1).